The chain runs to 565 residues: Nephronectin (565 aa).

Positions 1-19 are cleaved as a signal peptide; it reads MDFLLALVLVSSLYLQAAA. The EGF-like 1 domain occupies 52-87; sequence SWGQCQPVCQPRCKHGECIGPNKCKCHPGYAGKTCN. Intrachain disulfides connect C56/C69, C60/C75, C77/C86, C93/C104, C100/C113, and C115/C127. One can recognise an EGF-like 2; calcium-binding domain in the interval 89-128; it reads DLNECGLKPRPCKHRCMNTYGSYKCYCLNGYMLMPDGSCS. The EGF-like 3 domain maps to 132-168; the sequence is TCSMANCQYGCDVVKGQIRCQCPSPGLQLAPDGRTCV. Residues 169–213 form the EGF-like 4; calcium-binding domain; the sequence is DVDECATGRASCPRFRQCVNTFGSYICKCHKGFDLMYIGGKYQCH. Intrachain disulfides connect C173/C186, C180/C195, C197/C212, C218/C231, C225/C240, and C242/C253. Residues 214–254 form the EGF-like 5; calcium-binding domain; it reads DIDECSLGQYQCSSFARCYNIRGSYKCKCKEGYQGDGLTCV. The segment at 301 to 389 is disordered; that stretch reads YIPPIITNRP…KPRGDVFIPR (89 aa). The segment covering 304-316 has biased composition (low complexity); it reads PIITNRPTSKPTT. Over residues 317–347 the composition is skewed to pro residues; the sequence is RPTPKPTPIPTPPPPPPLPTELRTPLPPTTP. Positions 382–384 match the Integrin interaction motif; that stretch reads RGD. The region spanning 420–563 is the MAM domain; it reads HSCNFDHGLC…VSLKKGHCSE (144 aa).

The protein belongs to the nephronectin family. In terms of assembly, homodimer and homotrimer. In terms of tissue distribution, expressed in kidney and lung and to a lower extent in brain, pregnant uterus, placenta, thyroid gland and blood vessels.

Its subcellular location is the secreted. The protein resides in the extracellular space. It is found in the extracellular matrix. In terms of biological role, functional ligand of integrin alpha-8/beta-1 in kidney development. Regulates the expression of GDNF with integrin alpha-8/beta-1 which is essential for kidney development. May also play a role in the development and function of various tissues, regulating cell adhesion, spreading and survival through the binding of several integrins. This is Nephronectin (NPNT) from Homo sapiens (Human).